Here is a 101-residue protein sequence, read N- to C-terminus: Peroxisomal biogenesis factor 39 (101 aa).

It is found in the peroxisome. May be a peroxin involved in the PTS2-mediated protein import pathway. This Homo sapiens (Human) protein is Peroxisomal biogenesis factor 39.